We begin with the raw amino-acid sequence, 384 residues long: Cysteine protease ATG4B (384 aa).

Catalysis depends on Cys74, which acts as the Nucleophile. Active-site residues include Asp269 and His271. Residues 379–382 (FEIL) carry the LIR motif.

The protein belongs to the peptidase C54 family.

It localises to the cytoplasm. Its subcellular location is the cytosol. The protein localises to the cytoplasmic vesicle. The protein resides in the autophagosome. It is found in the endoplasmic reticulum. It localises to the mitochondrion. It carries out the reaction [protein]-C-terminal L-amino acid-glycyl-phosphatidylethanolamide + H2O = [protein]-C-terminal L-amino acid-glycine + a 1,2-diacyl-sn-glycero-3-phosphoethanolamine. The enzyme catalyses [protein]-C-terminal L-amino acid-glycyl-phosphatidylserine + H2O = [protein]-C-terminal L-amino acid-glycine + a 1,2-diacyl-sn-glycero-3-phospho-L-serine. In terms of biological role, cysteine protease that plays a key role in autophagy by mediating both proteolytic activation and delipidation of ATG8 family proteins. Required for canonical autophagy (macroautophagy), non-canonical autophagy as well as for mitophagy. The protease activity is required for proteolytic activation of ATG8 family proteins: cleaves the C-terminal amino acid of ATG8 proteins to reveal a C-terminal glycine. Exposure of the glycine at the C-terminus is essential for ATG8 proteins conjugation to phosphatidylethanolamine (PE) and insertion to membranes, which is necessary for autophagy. Protease activity is also required to counteract formation of high-molecular weight conjugates of ATG8 proteins (ATG8ylation): acts as a deubiquitinating-like enzyme that removes ATG8 conjugated to other proteins, such as ATG3. In addition to the protease activity, also mediates delipidation of ATG8 family proteins. Catalyzes delipidation of PE-conjugated forms of ATG8 proteins during macroautophagy. Also involved in non-canonical autophagy, a parallel pathway involving conjugation of ATG8 proteins to single membranes at endolysosomal compartments, by catalyzing delipidation of ATG8 proteins conjugated to phosphatidylserine (PS). In Xenopus laevis (African clawed frog), this protein is Cysteine protease ATG4B.